The primary structure comprises 613 residues: Thymidine kinase (613 aa).

Disordered stretches follow at residues methionine 1–serine 233 and serine 253–arginine 276. A compositionally biased stretch (low complexity) spans phenylalanine 8–alanine 18. A compositionally biased stretch (basic and acidic residues) spans proline 78–lysine 88. Over residues leucine 114–aspartate 126 the composition is skewed to basic residues. Residues histidine 199–glycine 218 are compositionally biased toward basic and acidic residues. An ATP-binding site is contributed by glycine 301 to threonine 308. The active-site Proton acceptor is glutamate 327. The substrate site is built by tyrosine 344, glutamine 365, and arginine 461.

Belongs to the herpesviridae thymidine kinase family. As to quaternary structure, homodimer.

The enzyme catalyses thymidine + ATP = dTMP + ADP + H(+). Functionally, catalyzes the transfer of the gamma-phospho group of ATP to thymidine to generate dTMP in the salvage pathway of pyrimidine synthesis. The dTMP serves as a substrate for DNA polymerase during viral DNA replication. Allows the virus to be reactivated and to grow in non-proliferative cells lacking a high concentration of phosphorylated nucleic acid precursors. This Equine herpesvirus 2 (strain 86/87) (EHV-2) protein is Thymidine kinase.